The primary structure comprises 181 residues: Large ribosomal subunit protein uL5 (181 aa).

It belongs to the universal ribosomal protein uL5 family. Part of the 50S ribosomal subunit; part of the 5S rRNA/L5/L18/L25 subcomplex. Contacts the 5S rRNA and the P site tRNA. Forms a bridge to the 30S subunit in the 70S ribosome.

This is one of the proteins that bind and probably mediate the attachment of the 5S RNA into the large ribosomal subunit, where it forms part of the central protuberance. In the 70S ribosome it contacts protein S13 of the 30S subunit (bridge B1b), connecting the 2 subunits; this bridge is implicated in subunit movement. Contacts the P site tRNA; the 5S rRNA and some of its associated proteins might help stabilize positioning of ribosome-bound tRNAs. The protein is Large ribosomal subunit protein uL5 of Helicobacter pylori (strain Shi470).